A 668-amino-acid chain; its full sequence is MCSTCANVLKYYDWDPHFRLIINPNKFLPIGFCDNPLMCCYPDLLPEFGTVWDCDQSPLQIYLESILGDDEWASTHEAIDPSVPPMHWDSAGKIFQPHPGVLMHHLIGEVAKAWDPNLPLFRLEADDGSITTPEQGTAVGGVIAEPSAQMSTAADMASGKSVDSEWEAFFSFHTSVNWSTSETQGKILFKQSLGPLLNPYLEHLSKLYVAWSGSIEVRFSISGSGVFGGKLAAIVVPPGVDPVQSTSMLQYPHVLFDARQVEPVIFTIPDLRSTLYHVMSDTDTTSLVIMVYNDLINPYANDSNSSGCIVTVETKPGPDFKFHLLKPPGSVLTHGSIPSDLIPKSSSLWIGNRYWTDITDFVIRPFVFQANRHFDFNQETAGWSTPRFRPITITISEKNGSKLGIGVATDYIIPGIPDGWPDTTIADKLIPAGDYSITTGEGNDIKTAQAYDTAAVVKNTTNFRGMYICGSLQRAWGDKKISNTAFITTAIRDGNEIKPSNTIDMTKLAVYQDTHVEQEVQTSDDTLALLGYTGIGEEAIGSNRDRVVRISVLPEAGARGGNHPIFYKNSIKLGYVIRSIDVFNSQILHTSRQLSLNHYLLPPDSFAVYRIIDSNGSWFDIGIDSEGFSFVGVSDIGKLEFPLSASYMGIQLAKIRLASNIRSRMTKL.

This sequence belongs to the caliciviridae capsid protein family. As to quaternary structure, homodimer. Homomultimer. Interacts with the minor capsid protein VP2. May bind to VP3 and Vpg proteins. Binds to alpha-2,6-linked sialic acid at surface of target cells. Interacts with host F11R/JAM-1/JAM-A; this interaction allows viral binding and entry into the host cell. Homooligomer; probably disulfide-linked. In terms of processing, cleaved by the viral protease to produce mature capsid protein. Cleaved by host caspase-2 and caspase-6 to generate protein p40, this might be linked to the cytopathic effect of the capsid leader protein.

The protein localises to the virion. It is found in the host cytoplasm. Functionally, capsid protein self assembles to form an icosahedral capsid with a T=3 symmetry, about 38 nm in diameter, and consisting of 180 capsid proteins. A smaller form of capsid with a diameter of 23 nm might be capsid proteins assembled as icosahedron with T=1 symmetry. The capsid encapsulates the genomic RNA and is decorated with VP2 proteins. Attaches virion to target cells by binding to feline junctional adhesion molecule A (F11R) and/or to alpha-2,6-linked sialic acid. Once attached, the virion is endocytosed. Acidification of the endosome induces conformational change of capsid protein thereby injecting virus genomic RNA into host cytoplasm. Its function is as follows. May function as a viroporin. This chain is Capsid protein VP1, found in Felidae (cat family).